Here is a 349-residue protein sequence, read N- to C-terminus: UDP-glucose 4-epimerase (349 aa).

NAD(+)-binding positions include 10 to 12 (GFI), 31 to 35 (DNFAN), 66 to 67 (DV), and Lys92. 132 to 134 (SAT) contributes to the substrate binding site. Tyr158 functions as the Proton acceptor in the catalytic mechanism. NAD(+)-binding residues include Lys162 and Tyr186. Substrate is bound by residues 186–188 (YFN), 207–209 (NNL), 225–227 (TIY), Arg240, and 303–306 (RPGD).

Belongs to the NAD(P)-dependent epimerase/dehydratase family. It depends on NAD(+) as a cofactor. As to expression, expressed in gonads, vulva, intestine, hypdermis and nervous system.

The enzyme catalyses UDP-alpha-D-glucose = UDP-alpha-D-galactose. It carries out the reaction UDP-N-acetyl-alpha-D-glucosamine = UDP-N-acetyl-alpha-D-galactosamine. The protein operates within carbohydrate metabolism; galactose metabolism. Its function is as follows. Catalyzes two distinct but analogous reactions: the reversible epimerization of UDP-glucose to UDP-galactose and the reversible epimerization of UDP-N-acetylglucosamine to UDP-N-acetylgalactosamine. The reaction with UDP-Gal plays a critical role in the Leloir pathway of galactose catabolism in which galactose is converted to the glycolytic intermediate glucose 6-phosphate. It contributes to the catabolism of dietary galactose and enables the endogenous biosynthesis of both UDP-Gal and UDP-GalNAc when exogenous sources are limited. Both UDP-sugar interconversions are important for the synthesis of glycoproteins and glycolipids. The sequence is that of UDP-glucose 4-epimerase from Caenorhabditis elegans.